Consider the following 505-residue polypeptide: uncharacterized protein (505 aa).

14 helical membrane passes run 9 to 29 (ANLT…PFIV), 49 to 69 (YFSV…SVAA), 86 to 106 (AASV…AFFI), 122 to 142 (LSIL…GFGA), 156 to 176 (IQAV…ACFA), 181 to 201 (QIQL…FYFF), 235 to 255 (IGVL…LGAS), 261 to 281 (AAII…ASLF), 310 to 330 (LLLA…LTIW), 341 to 361 (LLFI…LFYI), 371 to 391 (PAIV…TLSG), 395 to 415 (LGLY…NAIF), 435 to 455 (IIGP…IQFI), and 464 to 484 (LIAT…MLVC).

The protein localises to the cell membrane. May be involved in the production of the exopolysaccharide (EPS) component of the extracellular matrix during biofilm formation. EPS is responsible for the adhesion of chains of cells into bundles. This is an uncharacterized protein from Bacillus subtilis (strain 168).